Consider the following 887-residue polypeptide: Cadherin-1 (887 aa).

A signal peptide spans 1–26 (MGRRWGSPALQRFPVLVLLLLLQVCG). A propeptide spanning residues 27–160 (RRCDEAAPCQ…DPGFLRRQKR (134 aa)) is cleaved from the precursor. Cadherin domains are found at residues 161–268 (DWVI…KPVF), 269–381 (IKEV…IPIF), 382–493 (NPTM…PPVF), 494–599 (VPPI…DNGP), and 600–704 (TPEP…RRSY). Residues 161-714 (DWVIPPISCL…IVGGLGVPAI (554 aa)) are Extracellular-facing. Asp-263 contributes to the Ca(2+) binding site. Asn-291 is a glycosylation site (N-linked (GlcNAc...) asparagine). Ca(2+) is bound at residue Asp-294. A glycan (N-linked (GlcNAc...) asparagine) is linked at Asn-346. Residues Asn-564 and Asn-643 are each glycosylated (N-linked (GlcNAc...) asparagine). A helical membrane pass occupies residues 715-735 (LGILGGILALLILLLLLLLFA). Over 736–887 (RRRKVEKEPL…ELYGGGEDDE (152 aa)) the chain is Cytoplasmic. The segment at 745–770 (LLPPEDDMRDNVYNYDEEGGGEEDQD) is disordered. Positions 759 to 770 (YDEEGGGEEDQD) are enriched in acidic residues.

In terms of assembly, homodimer. Interacts with CTNNA2. As to expression, expressed in the liver.

The protein resides in the cell junction. The protein localises to the adherens junction. It is found in the cell membrane. Its subcellular location is the endosome. It localises to the golgi apparatus. The protein resides in the trans-Golgi network. The protein localises to the cytoplasm. It is found in the desmosome. Cadherins are calcium-dependent cell adhesion proteins. They preferentially interact with themselves in a homophilic manner in connecting cells; cadherins may thus contribute to the sorting of heterogeneous cell types. Promotes organization of radial actin fiber structure and cellular response to contractile forces, via anchoring of radial actin fibers to CDH1 junction complexes at the cell membrane. E-cadherin is a ligand for integrin alpha-E/beta-7. The sequence is that of Cadherin-1 (CDH1) from Gallus gallus (Chicken).